The chain runs to 452 residues: Pup--protein ligase (452 aa).

Glu-9 is a binding site for Mg(2+). Arg-53 provides a ligand contact to ATP. A Mg(2+)-binding site is contributed by Tyr-55. Catalysis depends on Asp-57, which acts as the Proton acceptor. A Mg(2+)-binding site is contributed by Glu-63. 2 residues coordinate ATP: Thr-66 and Trp-419.

Belongs to the Pup ligase/Pup deamidase family. Pup-conjugating enzyme subfamily.

It catalyses the reaction ATP + [prokaryotic ubiquitin-like protein]-L-glutamate + [protein]-L-lysine = ADP + phosphate + N(6)-([prokaryotic ubiquitin-like protein]-gamma-L-glutamyl)-[protein]-L-lysine.. It functions in the pathway protein degradation; proteasomal Pup-dependent pathway. Its pathway is protein modification; protein pupylation. Functionally, catalyzes the covalent attachment of the prokaryotic ubiquitin-like protein modifier Pup to the proteasomal substrate proteins, thereby targeting them for proteasomal degradation. This tagging system is termed pupylation. The ligation reaction involves the side-chain carboxylate of the C-terminal glutamate of Pup and the side-chain amino group of a substrate lysine. The polypeptide is Pup--protein ligase (Geodermatophilus obscurus (strain ATCC 25078 / DSM 43160 / JCM 3152 / CCUG 61914 / KCC A-0152 / KCTC 9177 / NBRC 13315 / NRRL B-3577 / G-20)).